The following is a 432-amino-acid chain: Adenosylhomocysteinase (432 aa).

The tract at residues 1–24 (MSAYSPLSAQLDADTDVDVESTRT) is disordered. Substrate-binding residues include D137 and E162. 163–165 (TTT) provides a ligand contact to NAD(+). Residues K192 and D196 each coordinate substrate. NAD(+) is bound by residues N197, 226 to 231 (GYGYCG), E249, N284, 305 to 307 (AGH), and N352.

Belongs to the adenosylhomocysteinase family. NAD(+) is required as a cofactor.

The protein resides in the cytoplasm. It catalyses the reaction S-adenosyl-L-homocysteine + H2O = L-homocysteine + adenosine. The protein operates within amino-acid biosynthesis; L-homocysteine biosynthesis; L-homocysteine from S-adenosyl-L-homocysteine: step 1/1. Functionally, may play a key role in the regulation of the intracellular concentration of adenosylhomocysteine. In Haloquadratum walsbyi (strain DSM 16854 / JCM 12705 / C23), this protein is Adenosylhomocysteinase.